Consider the following 59-residue polypeptide: Lantibiotic lacticin 3147 A1 (59 aa).

The propeptide occupies 1–29 (MNKNEIETQPVTWLEEVSDQNFDEDVFGA). Residues 30–31 (CS) constitute a cross-link (lanthionine (Cys-Ser)). A 2,3-didehydrobutyrine mark is found at T32 and T34. S36 carries the post-translational modification 2,3-didehydroalanine (Ser). Residues 38-48 (SDYWGNNGAWC) constitute a cross-link (lanthionine (Ser-Cys)). 2 cross-links (beta-methyllanthionine (Thr-Cys)) span residues 49–54 (TLTHEC) and 51–58 (THECMAWC).

Maturation of lantibiotics involves the enzymatic conversion of Thr, and Ser into dehydrated AA and the formation of thioether bonds with cysteine. This is followed by membrane translocation and cleavage of the modified precursor. Post-translationally, it is not established whether the 2,3-didehydrobutyrines are the E- or Z-isomers. In the NMR model they were assumed to be the Z-isomer.

It is found in the secreted. Lanthionine-containing peptide antibiotic (lantibiotic) active on Gram-positive bacteria. The bactericidal activity of lantibiotics is based on depolarization of energized bacterial cytoplasmic membranes, initiated by the formation of aqueous transmembrane pores. When present individually lacticin 3147 A1 exhibits strong activity towards L.lactis strain AM2, weak activity towards L.lactis strain HP and no activity towards L.lactis strain IFPL359, but when combined with lacticin 3147 A2 it displays strong activity towards all three strains. The protein is Lantibiotic lacticin 3147 A1 of Lactococcus lactis subsp. lactis (Streptococcus lactis).